Reading from the N-terminus, the 143-residue chain is Ribosome-binding factor A (143 aa).

Residues 119 to 143 form a disordered region; the sequence is KAKQQQFTPDTPDNSESVDGEKEQD. Polar residues predominate over residues 122–133; it reads QQQFTPDTPDNS.

It belongs to the RbfA family. As to quaternary structure, monomer. Binds 30S ribosomal subunits, but not 50S ribosomal subunits or 70S ribosomes.

The protein resides in the cytoplasm. In terms of biological role, one of several proteins that assist in the late maturation steps of the functional core of the 30S ribosomal subunit. Associates with free 30S ribosomal subunits (but not with 30S subunits that are part of 70S ribosomes or polysomes). Required for efficient processing of 16S rRNA. May interact with the 5'-terminal helix region of 16S rRNA. This is Ribosome-binding factor A from Shewanella frigidimarina (strain NCIMB 400).